Reading from the N-terminus, the 396-residue chain is S-adenosylmethionine synthase (396 aa).

His-16 serves as a coordination point for ATP. Mg(2+) is bound at residue Asp-18. Residue Glu-44 coordinates K(+). L-methionine contacts are provided by Glu-57 and Gln-100. A flexible loop region spans residues 100–110 (QSPDIAQGVDR). Residues 167–169 (DAK), 232–233 (RF), Asp-241, 247–248 (RK), Ala-264, and Lys-268 each bind ATP. Asp-241 lines the L-methionine pocket. Residue Lys-272 coordinates L-methionine.

Belongs to the AdoMet synthase family. Homotetramer; dimer of dimers. The cofactor is Mg(2+). K(+) serves as cofactor.

Its subcellular location is the cytoplasm. The enzyme catalyses L-methionine + ATP + H2O = S-adenosyl-L-methionine + phosphate + diphosphate. Its pathway is amino-acid biosynthesis; S-adenosyl-L-methionine biosynthesis; S-adenosyl-L-methionine from L-methionine: step 1/1. In terms of biological role, catalyzes the formation of S-adenosylmethionine (AdoMet) from methionine and ATP. The overall synthetic reaction is composed of two sequential steps, AdoMet formation and the subsequent tripolyphosphate hydrolysis which occurs prior to release of AdoMet from the enzyme. This chain is S-adenosylmethionine synthase, found in Ralstonia nicotianae (strain ATCC BAA-1114 / GMI1000) (Ralstonia solanacearum).